Reading from the N-terminus, the 22-residue chain is Protein YncP (22 aa).

The protein is Protein YncP of Escherichia coli (strain K12).